The primary structure comprises 1896 residues: Trinucleotide repeat-containing gene 6A protein (1896 aa).

2 stretches are compositionally biased toward basic and acidic residues: residues 1–21 and 39–57; these read MRELEAKATKDVERNLSRDLV and KKKEAAQKKATEQKIKVPE. Disordered stretches follow at residues 1-137, 159-209, 222-250, and 257-276; these read MREL…LLKR, SESS…DCST, EAWPSAPGSDPELAPECIDADSASNSESE, and ASGNTGGEKDGLRNSTGLGS. The segment at 1–917 is interaction with argonaute family proteins; sequence MRELEAKATK…GDPPKCNQSL (917 aa). Composition is skewed to low complexity over residues 69-93 and 101-113; these read ANSDNGTSTATSTNNNAKRATASNQ and QQPQQEQQQQQPQ. Residues 125-137 show a composition bias toward basic residues; the sequence is RFRHQEHKQLLKR. The interval 239-488 is sufficient for interaction with AGO1, AGO3 and AGO4; it reads IDADSASNSE…QAPSVMNGTS (250 aa). Sufficient for interaction with AGO2 stretches follow at residues 255 to 331, 303 to 384, 325 to 424, 394 to 480, and 487 to 736; these read VMAS…NAWG, GALI…STIG, NRMN…KVSF, SKVS…QIQA, and TSLS…NGTE. 2 stretches are compositionally biased toward polar residues: residues 396–410 and 417–429; these read VSGSSTHGTWGSLQE and SGTQKVSFSGQPQ. Disordered regions lie at residues 396–461, 548–683, 703–998, 1011–1126, and 1143–1182; these read VSGS…NELP, FQVN…RRKI, LSNS…DPSK, IPEA…PTGW, and QELNSSLNWPPYTKKMSSKGLSGKKRRRERGMMKGGNKQE. Residues 430–443 show a composition bias toward low complexity; it reads NITTETTGPNNTTN. Polar residues predominate over residues 444–461; the sequence is FMTSSLPNSGSVQNNELP. The sufficient for interaction with AGO1 and AGO4 stretch occupies residues 551-1279; the sequence is NTNKGGGVWE…MFGVGNTAAQ (729 aa). A compositionally biased stretch (gly residues) spans 573–584; sequence SGNGANSGGSRR. Composition is skewed to polar residues over residues 591–617 and 635–647; these read QNTGTGLSSVEWNKLPSNQHSNDSANG and GSATSQTNEQNSV. A compositionally biased stretch (basic and acidic residues) spans 665–683; it reads GRLEEKVTGESQSRDRRKI. Over residues 703-722 the composition is skewed to polar residues; sequence LSNSGWGQTPIKQNTAWDTE. A compositionally biased stretch (basic and acidic residues) spans 723–733; that stretch reads TSPRGERKTDN. Position 724 is a phosphoserine (Ser-724). The segment covering 738 to 766 has biased composition (polar residues); that stretch reads WGSSATQTFNSGACTDKTSPNSNDTSSVS. Low complexity predominate over residues 858-871; it reads SSSGGSDSDRSISG. Position 863 is a phosphoserine (Ser-863). Polar residues-rich tracts occupy residues 876 to 906 and 924 to 937; these read GKTSSFTWGNNINPNNSSGWDESSKPNSSQG and KPVSSPDWNKQQDI. Ser-976 carries the post-translational modification Phosphoserine. Composition is skewed to polar residues over residues 1033 to 1042, 1054 to 1064, and 1082 to 1105; these read AVSSKETSSG, TPATTVDNGTS, and AASNASTWGSSSVGPQSLSKSGPK. A sufficient for interaction with AGO2 region spans residues 1059 to 1129; it reads VDNGTSAWGK…GSRPTGWEEE (71 aa). Residues 1143–1163 are compositionally biased toward low complexity; it reads QELNSSLNWPPYTKKMSSKGL. Ser-1197 and Ser-1255 each carry phosphoserine. 3 disordered regions span residues 1234–1256, 1273–1306, and 1360–1395; these read GDYNRTVGKGPGSRPQISKESSM, VGNTAAQPRGMQQPPAQPLSSSQPNLRAQVPPPL, and QRAQSQRSAPSANRQQQDQQGRPLSVQQQMMQQSRQ. Composition is skewed to low complexity over residues 1284-1296 and 1360-1376; these read QQPPAQPLSSSQP and QRAQSQRSAPSANRQQQ. Thr-1406 carries the post-translational modification Phosphothreonine. 2 disordered regions span residues 1512–1570 and 1659–1685; these read MNSS…VTPG and PKNITAPSRPPPGLTGQKPPLSTWDNS. Ser-1520 is modified (phosphoserine). The tract at residues 1605–1896 is sufficient for interaction with AGO2; sequence TSAWSSIRAS…DHLGGGGESM (292 aa). Residues 1716 to 1788 form the RRM domain; sequence NWLVLKNLTP…TTILAEFASE (73 aa). Phosphoserine is present on residues Ser-1804 and Ser-1825.

This sequence belongs to the GW182 family. Interacts with AGO2. Interacts with AGO1, AGO3 and AGO4. Interacts with CNOT1; the interaction is direct and mediates the association with the CCR4-NOT complex. Interacts with ZC3H12A. Interacts with SND1. Interacts with GARRE1.

Its subcellular location is the cytoplasm. The protein localises to the P-body. Its function is as follows. Plays a role in RNA-mediated gene silencing by both micro-RNAs (miRNAs) and short interfering RNAs (siRNAs). Required for miRNA-dependent repression of translation and for siRNA-dependent endonucleolytic cleavage of complementary mRNAs by argonaute family proteins. As a scaffolding protein, associates with argonaute proteins bound to partially complementary mRNAs, and can simultaneously recruit CCR4-NOT and PAN deadenylase complexes. This chain is Trinucleotide repeat-containing gene 6A protein (Tnrc6a), found in Mus musculus (Mouse).